Consider the following 427-residue polypeptide: Trigger factor (427 aa).

Positions 163–248 constitute a PPIase FKBP-type domain; sequence GNIAIIDFKG…VKGIKAKELP (86 aa).

Belongs to the FKBP-type PPIase family. Tig subfamily.

The protein localises to the cytoplasm. The enzyme catalyses [protein]-peptidylproline (omega=180) = [protein]-peptidylproline (omega=0). Involved in protein export. Acts as a chaperone by maintaining the newly synthesized protein in an open conformation. Functions as a peptidyl-prolyl cis-trans isomerase. The polypeptide is Trigger factor (Clostridium botulinum (strain Eklund 17B / Type B)).